The chain runs to 1747 residues: E3 ubiquitin-protein ligase listerin (1747 aa).

The segment at 1–24 (MGGKTKQAPRTKNNAKPSSSSRTA) is disordered. Residues 8–24 (APRTKNNAKPSSSSRTA) show a composition bias toward polar residues. 5 HEAT repeats span residues 65 to 102 (AAIS…QSDV), 106 to 144 (KNIL…KCKK), 346 to 383 (NIRK…KVTQ), 424 to 461 (NAYF…NVLE), and 508 to 547 (KFWI…ANPS). At Ser-566 the chain carries Phosphoserine. HEAT repeat units follow at residues 612–653 (SRYI…LLGQ), 664–711 (EIVF…CAEA), 789–825 (SFIA…EHRP), 952–989 (LSRN…DPED), 1005–1042 (KWNE…ELVL), 1053–1090 (GNSS…FCPQ), 1129–1166 (KLSQ…NFEG), 1216–1258 (VEFI…SIAQ), 1269–1307 (VAVY…LFAK), 1330–1363 (FQAC…NSNI), 1364–1400 (TLDH…HFVA), and 1500–1539 (ENFL…QKDR). The segment at 1697-1744 (CYVCYTVIHQETCQLPKLTCKTCKKKFHGPCLYKWFTTSSKSTCPICR) adopts an RING-type zinc-finger fold.

It belongs to the LTN1 family. Component of the ribosome quality control complex (RQC), composed of at least the E3 ubiquitin ligase l(3)76BDr/LTN1 and Clbn/NEMF. The complex probably also contains TCF25 as well as TER94/VCP and its ubiquitin-binding cofactors. RQC forms a stable complex with 60S ribosomal subunits.

The protein localises to the cytoplasm. It localises to the cytosol. The catalysed reaction is S-ubiquitinyl-[E2 ubiquitin-conjugating enzyme]-L-cysteine + [acceptor protein]-L-lysine = [E2 ubiquitin-conjugating enzyme]-L-cysteine + N(6)-ubiquitinyl-[acceptor protein]-L-lysine.. The protein operates within protein modification; protein ubiquitination. Its function is as follows. E3 ubiquitin-protein ligase component of the ribosome quality control complex (RQC), a ribosome-associated complex that mediates ubiquitination and extraction of incompletely synthesized nascent chains for proteasomal degradation. Ubiquitination leads to TER94/VCP recruitment for extraction and degradation of the incomplete translation product. In Drosophila melanogaster (Fruit fly), this protein is E3 ubiquitin-protein ligase listerin.